A 231-amino-acid chain; its full sequence is Cytochrome c oxidase assembly factor 7 (231 aa).

Alanine 2 carries the N-acetylalanine modification. Sel1-like repeat units lie at residues 34–66 (PEGCYRLVDYLEGIQKNFDEAAKVLKFNCEKYG), 68–104 (GDSCYKLGAYYVTGKGGLTQDLKAASSCFLMACEKPG), 108–146 (VESCHNVGLLAHDGQVNEDGQPDLGKARDYYSRACDGGY), 147–183 (AASCFNLSAMFLQGAPGFPKDMGLACKYSMKACDLGH), and 184–219 (VWACANASRMYKLGDGVDKDEAKAEVLKNRARQLHK).

The protein belongs to the hcp beta-lactamase family. In terms of assembly, interacts with CHCHD4/MIA40 through transient intermolecular disulfide bonds.

It is found in the mitochondrion intermembrane space. Functionally, required for assembly of mitochondrial respiratory chain complex I and complex IV. The protein is Cytochrome c oxidase assembly factor 7 (Coa7) of Mus musculus (Mouse).